The following is a 460-amino-acid chain: Citrate synthase, peroxisomal (460 aa).

Ser-21 bears the Phosphoserine mark. Residues Lys-218 and Lys-239 each participate in a glycyl lysine isopeptide (Lys-Gly) (interchain with G-Cter in ubiquitin) cross-link. Residues His-293 and His-339 contribute to the active site. Glycyl lysine isopeptide (Lys-Gly) (interchain with G-Cter in ubiquitin) cross-links involve residues Lys-354 and Lys-385. The active site involves Asp-394. The C-terminal peroxisome targeting signal (PTS1) motif lies at 458–460; the sequence is SKL.

The protein belongs to the citrate synthase family. Interacts with F-box protein UCC1. In terms of processing, ubiquitinated by the E3 ubiquitin-protein ligase complex SCF(UCC1), which leads to its degradation by the proteasome. Ubiquitination is prevented by oxaloacetate, suggesting the existence of an oxaloacetate-dependent positive feedback loop that stabilizes CIT2.

Its subcellular location is the cytoplasm. The protein resides in the peroxisome. The catalysed reaction is oxaloacetate + acetyl-CoA + H2O = citrate + CoA + H(+). Its pathway is carbohydrate metabolism; tricarboxylic acid cycle; isocitrate from oxaloacetate: step 1/2. Peroxisomal citrate synthase involved in the citrate homeostasis. Catalyzes the condensation of acetyl coenzyme A and oxaloacetate to form citrate. Citrate synthase is the rate-limiting enzyme of the tricarboxylic acid (TCA) cycle. The chain is Citrate synthase, peroxisomal from Saccharomyces cerevisiae (strain ATCC 204508 / S288c) (Baker's yeast).